The primary structure comprises 190 residues: Potassium-transporting ATPase KdpC subunit (190 aa).

Residues 10 to 30 (TFLFLLLITGGVYPLLTTALG) traverse the membrane as a helical segment.

Belongs to the KdpC family. The system is composed of three essential subunits: KdpA, KdpB and KdpC.

Its subcellular location is the cell inner membrane. In terms of biological role, part of the high-affinity ATP-driven potassium transport (or Kdp) system, which catalyzes the hydrolysis of ATP coupled with the electrogenic transport of potassium into the cytoplasm. This subunit acts as a catalytic chaperone that increases the ATP-binding affinity of the ATP-hydrolyzing subunit KdpB by the formation of a transient KdpB/KdpC/ATP ternary complex. In Escherichia coli O81 (strain ED1a), this protein is Potassium-transporting ATPase KdpC subunit.